The primary structure comprises 368 residues: Cytochrome b-c1 complex subunit 2, mitochondrial (368 aa).

A mitochondrion-targeting transit peptide spans methionine 1 to arginine 16. Phosphoserine is present on residues serine 141 and serine 168.

The protein belongs to the peptidase M16 family. UQCRC2/QCR2 subfamily. As to quaternary structure, component of the ubiquinol-cytochrome c oxidoreductase (cytochrome b-c1 complex, complex III, CIII), a multisubunit enzyme composed of 10 subunits. The complex is composed of 3 respiratory subunits cytochrome b (COB), cytochrome c1 (CYT1) and Rieske protein (RIP1), 2 core protein subunits COR1 and QCR2, and 5 low-molecular weight protein subunits QCR6, QCR7, QCR8, QCR9 and QCR10. The complex exists as an obligatory dimer and forms supercomplexes (SCs) in the inner mitochondrial membrane with a monomer or a dimer of cytochrome c oxidase (complex IV, CIV), resulting in 2 different assemblies (supercomplexes III(2)IV and III(2)IV(2)).

The protein resides in the mitochondrion inner membrane. Functionally, component of the ubiquinol-cytochrome c oxidoreductase, a multisubunit transmembrane complex that is part of the mitochondrial electron transport chain which drives oxidative phosphorylation. The respiratory chain contains 3 multisubunit complexes succinate dehydrogenase (complex II, CII), ubiquinol-cytochrome c oxidoreductase (cytochrome b-c1 complex, complex III, CIII) and cytochrome c oxidase (complex IV, CIV), that cooperate to transfer electrons derived from NADH and succinate to molecular oxygen, creating an electrochemical gradient over the inner membrane that drives transmembrane transport and the ATP synthase. The cytochrome b-c1 complex catalyzes electron transfer from ubiquinol to cytochrome c, linking this redox reaction to translocation of protons across the mitochondrial inner membrane, with protons being carried across the membrane as hydrogens on the quinol. In the process called Q cycle, 2 protons are consumed from the matrix, 4 protons are released into the intermembrane space and 2 electrons are passed to cytochrome c. The polypeptide is Cytochrome b-c1 complex subunit 2, mitochondrial (QCR2) (Saccharomyces cerevisiae (strain ATCC 204508 / S288c) (Baker's yeast)).